The following is a 428-amino-acid chain: Enolase (428 aa).

Residue Gln-163 coordinates (2R)-2-phosphoglycerate. Glu-205 functions as the Proton donor in the catalytic mechanism. The Mg(2+) site is built by Asp-242, Glu-285, and Asp-312. (2R)-2-phosphoglycerate is bound by residues Lys-337, Arg-366, Ser-367, and Lys-388. The Proton acceptor role is filled by Lys-337.

The protein belongs to the enolase family. Requires Mg(2+) as cofactor.

It localises to the cytoplasm. It is found in the secreted. Its subcellular location is the cell surface. It catalyses the reaction (2R)-2-phosphoglycerate = phosphoenolpyruvate + H2O. The protein operates within carbohydrate degradation; glycolysis; pyruvate from D-glyceraldehyde 3-phosphate: step 4/5. Functionally, catalyzes the reversible conversion of 2-phosphoglycerate (2-PG) into phosphoenolpyruvate (PEP). It is essential for the degradation of carbohydrates via glycolysis. The polypeptide is Enolase (Neisseria gonorrhoeae (strain ATCC 700825 / FA 1090)).